Here is a 463-residue protein sequence, read N- to C-terminus: Exodeoxyribonuclease 7 large subunit (463 aa).

This sequence belongs to the XseA family. In terms of assembly, heterooligomer composed of large and small subunits.

It is found in the cytoplasm. The enzyme catalyses Exonucleolytic cleavage in either 5'- to 3'- or 3'- to 5'-direction to yield nucleoside 5'-phosphates.. Its function is as follows. Bidirectionally degrades single-stranded DNA into large acid-insoluble oligonucleotides, which are then degraded further into small acid-soluble oligonucleotides. The chain is Exodeoxyribonuclease 7 large subunit from Bordetella bronchiseptica (strain ATCC BAA-588 / NCTC 13252 / RB50) (Alcaligenes bronchisepticus).